The following is a 347-amino-acid chain: NADH-ubiquinone oxidoreductase chain 2 (347 aa).

11 helical membrane passes run 2 to 22 (LSPL…LVTF), 26 to 46 (SWIL…PLMA), 60 to 80 (YFIA…LAAW), 94 to 114 (IILN…PMHF), 127 to 147 (TGMI…IQIA), 151 to 171 (NNAF…WGGL), 179 to 197 (IIAY…MAPF), 201 to 223 (ITWV…LNTL), 242 to 262 (MLLL…GFTN), 274 to 294 (NLVI…FFYT), and 325 to 345 (LMTM…AIFI).

The protein belongs to the complex I subunit 2 family.

The protein localises to the mitochondrion inner membrane. The enzyme catalyses a ubiquinone + NADH + 5 H(+)(in) = a ubiquinol + NAD(+) + 4 H(+)(out). Its function is as follows. Core subunit of the mitochondrial membrane respiratory chain NADH dehydrogenase (Complex I) that is believed to belong to the minimal assembly required for catalysis. Complex I functions in the transfer of electrons from NADH to the respiratory chain. The immediate electron acceptor for the enzyme is believed to be ubiquinone. The polypeptide is NADH-ubiquinone oxidoreductase chain 2 (MT-ND2) (Lampetra fluviatilis (European river lamprey)).